The primary structure comprises 264 residues: ATP synthase subunit a (264 aa).

7 helical membrane passes run 29–49 (TWHI…LWIF), 90–110 (IAPL…MDMI), 111–131 (PVDW…KVVP), 134–154 (DVNI…YYSI), 177–197 (IPVN…SLAL), 208–228 (LIFI…TLGV), and 235–255 (LIFH…LTIV).

It belongs to the ATPase A chain family. F-type ATPases have 2 components, CF(1) - the catalytic core - and CF(0) - the membrane proton channel. CF(1) has five subunits: alpha(3), beta(3), gamma(1), delta(1), epsilon(1). CF(0) has three main subunits: a(1), b(2) and c(9-12). The alpha and beta chains form an alternating ring which encloses part of the gamma chain. CF(1) is attached to CF(0) by a central stalk formed by the gamma and epsilon chains, while a peripheral stalk is formed by the delta and b chains.

It is found in the cell inner membrane. Key component of the proton channel; it plays a direct role in the translocation of protons across the membrane. This Shewanella denitrificans (strain OS217 / ATCC BAA-1090 / DSM 15013) protein is ATP synthase subunit a.